The chain runs to 93 residues: Small ribosomal subunit protein uS19 (93 aa).

This sequence belongs to the universal ribosomal protein uS19 family.

Its function is as follows. Protein S19 forms a complex with S13 that binds strongly to the 16S ribosomal RNA. The sequence is that of Small ribosomal subunit protein uS19 from Mycobacteroides abscessus (strain ATCC 19977 / DSM 44196 / CCUG 20993 / CIP 104536 / JCM 13569 / NCTC 13031 / TMC 1543 / L948) (Mycobacterium abscessus).